Consider the following 574-residue polypeptide: WAP, Kazal, immunoglobulin, Kunitz and NTR domain-containing protein 2 (574 aa).

The signal sequence occupies residues 1-32 (MWALRGCRSGSRWGQGAALLLLLLGVPPRGLA). Residues 37-90 (RYSHAGICPNDMNPNLWVDAQSTCKRECETDQECETYEKCCPNVCGTKSCVAAR) enclose the WAP domain. Disulfide bonds link Cys-44/Cys-77, Cys-60/Cys-81, Cys-64/Cys-76, Cys-70/Cys-86, Cys-132/Cys-162, Cys-136/Cys-155, Cys-144/Cys-173, Cys-229/Cys-285, Cys-326/Cys-376, Cys-335/Cys-359, Cys-351/Cys-372, Cys-384/Cys-434, Cys-393/Cys-417, Cys-409/Cys-430, Cys-443/Cys-513, Cys-446/Cys-515, and Cys-457/Cys-564. Residues 124–175 (WDGQPVCKCRDRCEKEPSFTCASDGLTYYNRCYMDAEACSKGITLAVVTCRY) form the Kazal-like domain. The Ig-like C2-type domain maps to 208 to 301 (PALLNHPAHQ…GVLRADFPLS (94 aa)). 2 consecutive BPTI/Kunitz inhibitor domains span residues 326–376 (CLKP…MLAC) and 384–434 (CSLP…EESC). In terms of domain architecture, NTR spans 443-564 (CRACKPRQKL…LREVMHKKTC (122 aa)). Asn-517 carries N-linked (GlcNAc...) asparagine glycosylation.

Belongs to the WFIKKN family. Interacts with both mature and propeptide myostatin/MSTN.

It is found in the secreted. In terms of biological role, protease-inhibitor that contains multiple distinct protease inhibitor domains. Probably has serine protease- and metalloprotease-inhibitor activity. Inhibits the biological activity of mature myostatin, but not activin. This is WAP, Kazal, immunoglobulin, Kunitz and NTR domain-containing protein 2 (WFIKKN2) from Bos taurus (Bovine).